The following is a 382-amino-acid chain: Glycerate kinase (382 aa).

Belongs to the glycerate kinase type-1 family.

The catalysed reaction is (R)-glycerate + ATP = (2R)-3-phosphoglycerate + ADP + H(+). This is Glycerate kinase (glxK) from Bacillus subtilis (strain 168).